The chain runs to 130 residues: MTLLDPLANALSHITNSERVGKKEVYIKPASKLIGEVLRVMQENGYIGEFEFIDDGRAGIYRVQLIGKINKAGAIKPRFPVKAKNYEYWEKRFLPAFEFGILIVSTSQGVMTHKEAREKGIGGRLIAYVY.

The protein belongs to the universal ribosomal protein uS8 family. In terms of assembly, part of the 30S ribosomal subunit.

Its function is as follows. One of the primary rRNA binding proteins, it binds directly to 16S rRNA central domain where it helps coordinate assembly of the platform of the 30S subunit. This chain is Small ribosomal subunit protein uS8, found in Thermococcus gammatolerans (strain DSM 15229 / JCM 11827 / EJ3).